The chain runs to 291 residues: Pirin (291 aa).

Residues His56, His58, His101, and Glu103 each contribute to the Fe cation site.

This sequence belongs to the pirin family. May interact with NF1/CTF1. Interacts with BCL3. Identified in a complex comprised of PIR, BLC3, NFKB1 and target DNA. Requires Fe cation as cofactor.

The protein resides in the nucleus. It is found in the cytoplasm. The catalysed reaction is quercetin + O2 = 2-(3,4-dihydroxybenzoyloxy)-4,6-dihydroxybenzoate + CO. Its pathway is flavonoid metabolism; quercetin degradation. Transcriptional coregulator of NF-kappa-B which facilitates binding of NF-kappa-B proteins to target kappa-B genes in a redox-state-dependent manner. May be required for efficient terminal myeloid maturation of hematopoietic cells. Has quercetin 2,3-dioxygenase activity (in vitro). The polypeptide is Pirin (Pir) (Rattus norvegicus (Rat)).